The sequence spans 271 residues: Ribosomal RNA small subunit methyltransferase A (271 aa).

The S-adenosyl-L-methionine site is built by asparagine 28, leucine 30, glycine 54, glutamate 75, aspartate 99, and asparagine 117.

It belongs to the class I-like SAM-binding methyltransferase superfamily. rRNA adenine N(6)-methyltransferase family. RsmA subfamily.

It localises to the cytoplasm. The catalysed reaction is adenosine(1518)/adenosine(1519) in 16S rRNA + 4 S-adenosyl-L-methionine = N(6)-dimethyladenosine(1518)/N(6)-dimethyladenosine(1519) in 16S rRNA + 4 S-adenosyl-L-homocysteine + 4 H(+). Functionally, specifically dimethylates two adjacent adenosines (A1518 and A1519) in the loop of a conserved hairpin near the 3'-end of 16S rRNA in the 30S particle. May play a critical role in biogenesis of 30S subunits. The polypeptide is Ribosomal RNA small subunit methyltransferase A (Thermus thermophilus (strain ATCC 27634 / DSM 579 / HB8)).